Consider the following 685-residue polypeptide: Phenoloxidase subunit 1 (685 aa).

The propeptide occupies 1-51 (MSDAKNNLLLFFDRPSEPCFMQKGEENAVFEIPDNYYPEKYQRVSNAIGNR). An N-linked (GlcNAc...) asparagine glycan is attached at Asn184. 3 residues coordinate Cu cation: His209, His213, and His239. 2 N-linked (GlcNAc...) asparagine glycosylation sites follow: Asn254 and Asn324. Residue Glu351 is the Proton acceptor of the active site. Cu cation-binding residues include His366, His370, and His406. Residues Asn491 and Asn540 are each glycosylated (N-linked (GlcNAc...) asparagine). 2 cysteine pairs are disulfide-bonded: Cys581–Cys623 and Cys583–Cys630.

As to quaternary structure, heterodimer. The cofactor is Cu(2+). Post-translationally, the N-terminus is blocked. Synthesized by hemocytes and released into the hemolymph plasma.

The protein resides in the secreted. The catalysed reaction is 2 L-dopa + O2 = 2 L-dopaquinone + 2 H2O. It catalyses the reaction L-tyrosine + O2 = L-dopaquinone + H2O. Its function is as follows. This is a copper-containing oxidase that functions in the formation of pigments such as melanins and other polyphenolic compounds. Catalyzes the rate-limiting conversions of tyrosine to DOPA, DOPA to DOPA-quinone and possibly 5,6 dihydroxyindole to indole-5'6 quinone. This chain is Phenoloxidase subunit 1, found in Bombyx mori (Silk moth).